The chain runs to 432 residues: Gamma-glutamyl phosphate reductase (432 aa).

Belongs to the gamma-glutamyl phosphate reductase family.

Its subcellular location is the cytoplasm. It catalyses the reaction L-glutamate 5-semialdehyde + phosphate + NADP(+) = L-glutamyl 5-phosphate + NADPH + H(+). It participates in amino-acid biosynthesis; L-proline biosynthesis; L-glutamate 5-semialdehyde from L-glutamate: step 2/2. Catalyzes the NADPH-dependent reduction of L-glutamate 5-phosphate into L-glutamate 5-semialdehyde and phosphate. The product spontaneously undergoes cyclization to form 1-pyrroline-5-carboxylate. The protein is Gamma-glutamyl phosphate reductase of Corynebacterium melassecola.